Consider the following 392-residue polypeptide: Ameloblastin (392 aa).

Residues 1–26 (MPALKIPLFKMKDMILILCLLKMSSA) form the signal peptide. P37 carries the hydroxyproline modification. A Phosphoserine modification is found at S43. Disordered regions lie at residues 86-109 (FPWM…PGQK), 247-280 (TLEF…LADP), and 349-392 (TTLG…FQEP). A compositionally biased stretch (low complexity) spans 97–109 (QQPSLQPQQPGQK). Positions 359–381 (VDSTATPDTQHTLMPRNKAQQPQ) are enriched in polar residues. Over residues 382 to 392 (IKHDAWHFQEP) the composition is skewed to basic and acidic residues.

It belongs to the ameloblastin family.

The protein localises to the secreted. Its subcellular location is the extracellular space. It is found in the extracellular matrix. Its function is as follows. Involved in the mineralization and structural organization of enamel. The chain is Ameloblastin (AMBN) from Bos taurus (Bovine).